Consider the following 1179-residue polypeptide: Probable manganese-transporting ATPase PDR2 (1179 aa).

The Cytoplasmic segment spans residues 1-20 (MSSFRVGGKVVEKVDLCRKK). The chain crosses the membrane as a helical span at residues 21 to 42 (QLVWRLDVWPFAILYTVWLTTI). The Lumenal portion of the chain corresponds to 43 to 50 (VPSIDFSD). Residues 51–71 (ACIALGGLSAFHILVLLFTTW) traverse the membrane as a helical segment. Over 72 to 192 (SVDFKCFVQF…FDYPQPTFQK (121 aa)) the chain is Cytoplasmic. A helical transmembrane segment spans residues 193-215 (LMKENCMEPFFVFQVFCVGLWCL). Residues 216–218 (DEF) lie on the Lumenal side of the membrane. A helical transmembrane segment spans residues 219 to 238 (WYYSVFTLFMLFMFESTMAK). At 239–402 (SRLKTLTDLR…ERVTANSWES (164 aa)) the chain is on the cytoplasmic side. A helical transmembrane segment spans residues 403–422 (GLFILFLVVFAVIAAGYVLV). Residues 423-435 (KGLEDPTRSKYKL) lie on the Lumenal side of the membrane. The helical transmembrane segment at 436-453 (LLGCSLIITSVIPPELPM) threads the bilayer. Over 454 to 947 (ELSIAVNTSL…RQGRSTLVTT (494 aa)) the chain is Cytoplasmic. Asp-491 (4-aspartylphosphate intermediate) is an active-site residue. Mg(2+)-binding residues include Asp-812 and Asp-816. The interval 833–880 (KLPLSPSDSSKDDKSKSKKSKLPLEPASKTITQNGEGSSKGKIPPQNR) is disordered. A helical membrane pass occupies residues 948–967 (LQMFKILGLNCLATAYVLSV). Residues 968 to 979 (MYLDGVKLGDVQ) lie on the Lumenal side of the membrane. Residues 980-997 (ATISGVLTAAFFLFISHA) form a helical membrane-spanning segment. Over 998-1013 (RPLQTLSAERPHPSVF) the chain is Cytoplasmic. A helical membrane pass occupies residues 1014–1034 (SVYLFLSLIGQFAVHLTFLVY). Residues 1035–1059 (SVKEAEKHMPEECIEPDASFHPNLV) lie on the Lumenal side of the membrane. Residues 1060–1079 (NTVSYMVSMMLQVATFAVNY) traverse the membrane as a helical segment. Residues 1080 to 1092 (MGHPFNQSIRENK) lie on the Cytoplasmic side of the membrane. A helical membrane pass occupies residues 1093 to 1110 (PFFYALIAGAGFFTVIAS). Residues 1111–1128 (DLFRDLNDSLKLVPLPQG) are Lumenal-facing. A helical transmembrane segment spans residues 1129–1148 (LRDKLLIWASLMFIICYSWE). Residues 1149 to 1179 (RLLRWAFPGKISSWKHKQRAVTANLEKKKKV) lie on the Cytoplasmic side of the membrane.

Belongs to the cation transport ATPase (P-type) (TC 3.A.3) family. Type V subfamily. Highly expressed in root meristem. Expressed in pavement cells of trichomes, stipules, stamens and pollen grains.

The protein resides in the endoplasmic reticulum membrane. The enzyme catalyses ATP + H2O = ADP + phosphate + H(+). Functionally, mediates manganese transport into the endoplasmic reticulum. The ATPase activity is required for cellular manganese homeostasis. Plays an important role in pollen and root development through its impact on protein secretion and transport processes. Functions together with LPR1 and LPR2 in a common pathway that adjusts root meristem activity to phosphate availability. Under phosphate limitation, restricts SHR movement in root meristem and is required for maintaining SCR expression in the root meristem stem-cell niche as well as for proximal meristem activity. Can complement the yeast spf1 mutant. This Arabidopsis thaliana (Mouse-ear cress) protein is Probable manganese-transporting ATPase PDR2 (PDR2).